Consider the following 214-residue polypeptide: Peptidyl-tRNA hydrolase (214 aa).

TRNA is bound at residue tyrosine 14. Histidine 19 acts as the Proton acceptor in catalysis. Tyrosine 64, asparagine 66, and asparagine 113 together coordinate tRNA. The disordered stretch occupies residues 184–214 (RINAPPPKPEKKRGSETSDPSAESADHAGGG).

This sequence belongs to the PTH family. As to quaternary structure, monomer.

The protein localises to the cytoplasm. The enzyme catalyses an N-acyl-L-alpha-aminoacyl-tRNA + H2O = an N-acyl-L-amino acid + a tRNA + H(+). In terms of biological role, hydrolyzes ribosome-free peptidyl-tRNAs (with 1 or more amino acids incorporated), which drop off the ribosome during protein synthesis, or as a result of ribosome stalling. Functionally, catalyzes the release of premature peptidyl moieties from peptidyl-tRNA molecules trapped in stalled 50S ribosomal subunits, and thus maintains levels of free tRNAs and 50S ribosomes. The sequence is that of Peptidyl-tRNA hydrolase from Roseiflexus castenholzii (strain DSM 13941 / HLO8).